A 293-amino-acid chain; its full sequence is uncharacterized protein (293 aa).

In terms of domain architecture, HTH lysR-type spans 1 to 60; the sequence is MHITLRQLEVFAEVLKSGSTTQASVMLALSQSAVSAALTDLEGQLGVQLFDRVGKRLVVN. The H-T-H motif DNA-binding region spans 20–39; that stretch reads TTQASVMLALSQSAVSAALT.

Belongs to the LysR transcriptional regulatory family.

This is an uncharacterized protein from Escherichia coli O157:H7.